Consider the following 353-residue polypeptide: S-adenosylmethionine:tRNA ribosyltransferase-isomerase (353 aa).

This sequence belongs to the QueA family. In terms of assembly, monomer.

It localises to the cytoplasm. The catalysed reaction is 7-aminomethyl-7-carbaguanosine(34) in tRNA + S-adenosyl-L-methionine = epoxyqueuosine(34) in tRNA + adenine + L-methionine + 2 H(+). It participates in tRNA modification; tRNA-queuosine biosynthesis. In terms of biological role, transfers and isomerizes the ribose moiety from AdoMet to the 7-aminomethyl group of 7-deazaguanine (preQ1-tRNA) to give epoxyqueuosine (oQ-tRNA). The sequence is that of S-adenosylmethionine:tRNA ribosyltransferase-isomerase from Paraburkholderia phymatum (strain DSM 17167 / CIP 108236 / LMG 21445 / STM815) (Burkholderia phymatum).